The sequence spans 1314 residues: Tetratricopeptide repeat protein 21A (1314 aa).

19 TPR repeats span residues 110 to 143, 214 to 247, 326 to 359, 494 to 527, 529 to 561, 565 to 598, 616 to 649, 721 to 754, 755 to 788, 790 to 821, 831 to 863, 883 to 916, 918 to 950, 951 to 984, 986 to 1018, 1022 to 1055, 1195 to 1228, 1230 to 1262, and 1264 to 1297; these read STAL…SSGS, LPAL…DENN, ALVA…EENR, MEPL…DPTF, DAHL…NFQV, PLYH…PTSK, ASIL…FSGT, PHSS…NPHD, ASLV…SGQD, LCCE…DSGV, VKCL…QSRI, ASIC…SPTD, KVVL…EQTH, ERAA…APDN, LVLN…SSRV, PGFN…STWG, EKSW…NKSC, RAYE…SHQA, and PAIG…HPKY.

This sequence belongs to the TTC21 family. In terms of assembly, interacts with IFT20. Interacts with IFT52. Interacts with IFT140. Interacts with CEP78; regulating IFT20 stability and localization.

Functionally, intraflagellar transport (IFT)-associated protein required for spermatogenesis. Required for sperm flagellar formation and intraflagellar transport. This Mus musculus (Mouse) protein is Tetratricopeptide repeat protein 21A (Ttc21a).